A 500-amino-acid chain; its full sequence is Cytochrome P450 71D7 (500 aa).

Residue Cys-441 coordinates heme.

It belongs to the cytochrome P450 family. It depends on heme as a cofactor.

The polypeptide is Cytochrome P450 71D7 (CYP71D7) (Solanum chacoense (Chaco potato)).